Here is a 574-residue protein sequence, read N- to C-terminus: Sulfate adenylyltransferase (574 aa).

Positions Met-1–Tyr-170 are N-terminal. Residues Asp-171–Lys-395 form a catalytic region. Gln-198 is a sulfate binding site. Residues Gln-198–Asn-201 and Gly-292–His-295 each bind ATP. Catalysis depends on residues Thr-199, Arg-200, and Asn-201. Arg-200 is a binding site for sulfate. Ala-296 contacts sulfate. Met-334 serves as a coordination point for ATP. Positions Gln-396–Ile-574 are allosteric regulation domain; adenylyl-sulfate kinase-like. 3'-phosphoadenylyl sulfate contacts are provided by residues Glu-435–Arg-438, Arg-452, Ile-478–Ala-479, and Lys-519.

In the N-terminal section; belongs to the sulfate adenylyltransferase family. This sequence in the C-terminal section; belongs to the APS kinase family. Homohexamer. Dimer of trimers.

It is found in the cytoplasm. The catalysed reaction is sulfate + ATP + H(+) = adenosine 5'-phosphosulfate + diphosphate. It participates in sulfur metabolism; hydrogen sulfide biosynthesis; sulfite from sulfate: step 1/3. Its activity is regulated as follows. Allosterically inhibited by 3'-phosphoadenosine 5'-phosphosulfate (PAPS). In terms of biological role, catalyzes the first intracellular reaction of sulfate assimilation, forming adenosine-5'-phosphosulfate (APS) from inorganic sulfate and ATP. Plays an important role in sulfate activation as a component of the biosynthesis pathway of sulfur-containing amino acids. The chain is Sulfate adenylyltransferase from Mycosarcoma maydis (Corn smut fungus).